The primary structure comprises 446 residues: Indoleacetamide hydrolase (446 aa).

Active-site charge relay system residues include Lys-71 and Ser-146. The active-site Acyl-ester intermediate is Ser-170.

Belongs to the amidase family.

Its pathway is plant hormone metabolism; auxin biosynthesis. In terms of biological role, hydrolyzes indole-3-acetamide (IAM) into indole-3-acetic acid (IAA). The sequence is that of Indoleacetamide hydrolase (iaaH) from Pseudomonas syringae pv. syringae.